We begin with the raw amino-acid sequence, 1056 residues long: ATP-dependent helicase wrn-1 (1056 aa).

The tract at residues 1–102 is disordered; it reads MISDDDDLPS…SSSDDSDQGD (102 aa). 2 repeat units span residues 17–26 and 28–37. The 2 X 10 AA repeats of N-[ED]-E-L-P-E-T-E-P-E stretch occupies residues 17–37; sequence NEELPETEPEDNDELPETEPE. Residues 19-38 show a composition bias toward acidic residues; the sequence is ELPETEPEDNDELPETEPES. Over residues 43-53 the composition is skewed to polar residues; it reads PTVTSNKTENQ. Residues 54 to 63 are compositionally biased toward acidic residues; that stretch reads VADEDYDSFD. Positions 236–406 constitute a Helicase ATP-binding domain; that stretch reads VRNVLGGKDQ…IANLRLRKPL (171 aa). 249–256 provides a ligand contact to ATP; that stretch reads MSTGYGKS. The DEAH box motif lies at 348-351; it reads DEAH. Residues 427–583 form the Helicase C-terminal domain; that stretch reads MAEDLGLFMK…NLTMMLRQLE (157 aa). Positions 591, 614, 615, and 618 each coordinate Zn(2+). The segment at 749 to 771 is disordered; the sequence is KEKAAPSTVPGASRSQSTKSSTE. Positions 761-771 are enriched in polar residues; sequence SRSQSTKSSTE. Positions 806 to 886 constitute an HRDC domain; that stretch reads PEKIDQLRSR…VQFSKETGIA (81 aa). A disordered region spans residues 1018 to 1056; it reads QEKPDIQSMPSTSNPSTIKTVPSTPSSSLRAPPLKKFKL. Over residues 1025-1046 the composition is skewed to polar residues; sequence SMPSTSNPSTIKTVPSTPSSSL.

This sequence belongs to the helicase family. RecQ subfamily. Zn(2+) serves as cofactor.

It is found in the nucleus. It catalyses the reaction Couples ATP hydrolysis with the unwinding of duplex DNA by translocating in the 3'-5' direction.. It carries out the reaction ATP + H2O = ADP + phosphate + H(+). In terms of biological role, essential for the formation of DNA replication focal centers; stably associates with foci elements generating binding sites for RP-A. Exhibits a magnesium-dependent ATP-dependent 3'-5' DNA-helicase activity. May be involved in the control of genomic stability. The protein is ATP-dependent helicase wrn-1 (wrn-1) of Caenorhabditis elegans.